Here is a 150-residue protein sequence, read N- to C-terminus: Large ribosomal subunit protein uL15 (150 aa).

Residues 1–57 (MTLRLESLKPNKGARRRKLRKGRGIAAGQGASCGFGMRGQKSRSGRPTRPGFEGGQM) are disordered. The segment covering 12 to 23 (KGARRRKLRKGR) has biased composition (basic residues). Over residues 25-37 (IAAGQGASCGFGM) the composition is skewed to gly residues.

The protein belongs to the universal ribosomal protein uL15 family. In terms of assembly, part of the 50S ribosomal subunit.

Its function is as follows. Binds to the 23S rRNA. The chain is Large ribosomal subunit protein uL15 from Synechococcus sp. (strain CC9311).